Reading from the N-terminus, the 95-residue chain is Large ribosomal subunit protein uL23 (95 aa).

It belongs to the universal ribosomal protein uL23 family. In terms of assembly, part of the 50S ribosomal subunit. Contacts protein L29, and trigger factor when it is bound to the ribosome.

In terms of biological role, one of the early assembly proteins it binds 23S rRNA. One of the proteins that surrounds the polypeptide exit tunnel on the outside of the ribosome. Forms the main docking site for trigger factor binding to the ribosome. The protein is Large ribosomal subunit protein uL23 of Desulfotalea psychrophila (strain LSv54 / DSM 12343).